A 79-amino-acid chain; its full sequence is Panulirin (79 aa).

Positions M1 to G22 are cleaved as a signal peptide. Residues D23–P26 constitute a propeptide that is removed on maturation. 3 disulfide bridges follow: C33–C63, C40–C56, and C46–C64. A propeptide spanning residues Q75 to A79 is cleaved from the precursor.

As to quaternary structure, monomer. Post-translationally, contains 3 disulfide bonds. In terms of tissue distribution, expressed in hemocytes (at protein level).

Involved in the melanization cascade in response to lipopolysaccharide (LPS). In vitro, reversibly and competitively inhibits trypsin (Ki=8.6 nM) but not serine proteases chymotrypsin, elastase, subtilisin, thrombin and plasmin, cysteine peptidase papain or metallopeptidase carboxypeptidase A. This is Panulirin from Panulirus argus (Caribbean spiny lobster).